Reading from the N-terminus, the 362-residue chain is MDLHLFDYAEPGNFSDISWPCNSSDCIVVDTVLCPNMPNKSVLLYTLSFIYIFIFVIGMIANSVVVWVNIQAKTTGYDTHCYILNLAIADLWVVVTIPVWVVSLVQHNQWPMGELTCKITHLIFSINLFGSIFFLTCMSVDRYLSITYFASTSSRRKKVVRRAVCVLVWLLAFCVSLPDTYYLKTVTSASNNETYCRSFYPEHSVKEWLISMELVSVVLGFAIPFCVIAVFYCLLARAISASSDQEKQSSRKIIFSYVVVFLVCWLPYHVVVLLDIFSILHYIPFTCQLENFLFTALHVTQCLSLVHCCVNPVLYSFINRNYRYELMKAFIFKYSAKTGLTKLIDASRVSETEYSALEQNAK.

The Extracellular segment spans residues 1-40 (MDLHLFDYAEPGNFSDISWPCNSSDCIVVDTVLCPNMPNK). N-linked (GlcNAc...) asparagine glycans are attached at residues Asn-13, Asn-22, and Asn-39. Residues 41-61 (SVLLYTLSFIYIFIFVIGMIA) form a helical membrane-spanning segment. Topologically, residues 62–81 (NSVVVWVNIQAKTTGYDTHC) are cytoplasmic. A helical transmembrane segment spans residues 82-102 (YILNLAIADLWVVVTIPVWVV). At 103–118 (SLVQHNQWPMGELTCK) the chain is on the extracellular side. Cys-117 and Cys-196 are joined by a disulfide. Residues 119-139 (ITHLIFSINLFGSIFFLTCMS) traverse the membrane as a helical segment. At 140–162 (VDRYLSITYFASTSSRRKKVVRR) the chain is on the cytoplasmic side. The chain crosses the membrane as a helical span at residues 163–183 (AVCVLVWLLAFCVSLPDTYYL). Over 184–213 (KTVTSASNNETYCRSFYPEHSVKEWLISME) the chain is Extracellular. A helical membrane pass occupies residues 214–234 (LVSVVLGFAIPFCVIAVFYCL). Residues 235–252 (LARAISASSDQEKQSSRK) are Cytoplasmic-facing. The helical transmembrane segment at 253-273 (IIFSYVVVFLVCWLPYHVVVL) threads the bilayer. Residues 274-296 (LDIFSILHYIPFTCQLENFLFTA) lie on the Extracellular side of the membrane. Residues 297–319 (LHVTQCLSLVHCCVNPVLYSFIN) form a helical membrane-spanning segment. Over 320-362 (RNYRYELMKAFIFKYSAKTGLTKLIDASRVSETEYSALEQNAK) the chain is Cytoplasmic. The segment at 324–362 (YELMKAFIFKYSAKTGLTKLIDASRVSETEYSALEQNAK) is C-terminal cytoplasmic tail. Residues Ser-347, Ser-350, and Ser-355 each carry the phosphoserine modification.

Belongs to the G-protein coupled receptor 1 family. Atypical chemokine receptor subfamily. In terms of assembly, homodimer. Can form heterodimers with CXCR4; heterodimerization may regulate CXCR4 signaling activity. Interacts with ARRB1 and ARRB2. In terms of processing, the Ser/Thr residues in the C-terminal cytoplasmic tail may be phosphorylated. Ubiquitinated at the Lys residues in its C-terminal cytoplasmic tail and is essential for correct trafficking from and to the cell membrane. Deubiquitinated by CXCL12-stimulation in a reversible manner.

The protein resides in the cell membrane. The protein localises to the early endosome. It localises to the recycling endosome. Its function is as follows. Atypical chemokine receptor that controls chemokine levels and localization via high-affinity chemokine binding that is uncoupled from classic ligand-driven signal transduction cascades, resulting instead in chemokine sequestration, degradation, or transcytosis. Also known as interceptor (internalizing receptor) or chemokine-scavenging receptor or chemokine decoy receptor. Acts as a receptor for chemokines CXCL11 and CXCL12/SDF1. Chemokine binding does not activate G-protein-mediated signal transduction but instead induces beta-arrestin recruitment, leading to ligand internalization and activation of MAPK signaling pathway. Required for regulation of CXCR4 protein levels in migrating interneurons, thereby adapting their chemokine responsiveness. In glioma cells, transduces signals via MEK/ERK pathway, mediating resistance to apoptosis. Promotes cell growth and survival. Not involved in cell migration, adhesion or proliferation of normal hematopoietic progenitors but activated by CXCL11 in malignant hemapoietic cells, leading to phosphorylation of ERK1/2 (MAPK3/MAPK1) and enhanced cell adhesion and migration. Plays a regulatory role in CXCR4-mediated activation of cell surface integrins by CXCL12. Required for heart valve development. Regulates axon guidance in the oculomotor system through the regulation of CXCL12 levels. This is Atypical chemokine receptor 3 (ACKR3) from Canis lupus familiaris (Dog).